The chain runs to 449 residues: Clusterin (449 aa).

The first 22 residues, 1-22 (MMKTLLLFVGLLLTWESGQVLG), serve as a signal peptide directing secretion. Residues 78–81 (KKKK) carry the Nuclear localization signal motif. N86 carries an N-linked (GlcNAc...) (complex) asparagine glycan. Intrachain disulfides connect C102–C313, C113–C305, C116–C302, C121–C295, and C129–C285. A glycan (N-linked (GlcNAc...) asparagine) is linked at N103. The residue at position 133 (S133) is a Phosphoserine. Residues N145, N291, and N354 are each glycosylated (N-linked (GlcNAc...) asparagine). N-linked (GlcNAc...) (complex) asparagine glycosylation occurs at N374. S396 carries the post-translational modification Phosphoserine. Residues 443–447 (RKKHR) carry the Nuclear localization signal motif.

The protein belongs to the clusterin family. Antiparallel disulfide-linked heterodimer of an alpha chain and a beta chain. Self-associates and forms higher oligomers. Interacts with a broad range of misfolded proteins, including APP, APOC2 and LYZ. Slightly acidic pH promotes interaction with misfolded proteins. Forms high-molecular weight oligomers upon interaction with misfolded proteins. Interacts with APOA1, LRP2, CLUAP1 and PON1. Interacts with the complement membrane attack complex. Interacts (via alpha chain) with XRCC6. Interacts with SYVN1, COMMD1, BTRC, CUL1 and with ubiquitin and SCF (SKP1-CUL1-F-box protein) E3 ubiquitin-protein ligase complexes. Interacts (via alpha chain) with BAX in stressed cells, where BAX undergoes a conformation change leading to association with the mitochondrial membrane. Does not interact with BAX in unstressed cells. Found in a complex with LTF, CLU, EPPIN and SEMG1. Interacts (immaturely glycosylated pre-secreted form) with HSPA5; this interaction promotes CLU stability and facilitates stress-induced CLU retrotranslocation from the secretory pathway to the mitochondria, thereby reducing stress-induced apoptosis by stabilizing mitochondrial membrane integrity. Interacts (isoform 4) with BCL2L1; this interaction releases and activates BAX and promotes cell death. Interacts with TGFBR2 and ACVR1. Interacts (secreted form) with STMN3; this interaction may act as an important modulator during neuronal differentiation. Interacts with VLDLR and LRP8. Post-translationally, proteolytically cleaved on its way through the secretory system, probably within the Golgi lumen. Proteolytic cleavage is not necessary for its chaperone activity. All non-secreted forms are not proteolytically cleaved. Chaperone activity of uncleaved forms is dependent on a non-reducing environment. Polyubiquitinated, leading to proteasomal degradation. Under cellular stress, the intracellular level of cleaved form is reduced due to proteasomal degradation. In terms of processing, extensively glycosylated with sulfated N-linked carbohydrates. About 30% of the protein mass is comprised of complex N-linked carbohydrate. Endoplasmic reticulum (ER) stress induces changes in glycosylation status and increases level of hypoglycosylated forms. Core carbohydrates are essential for chaperone activity. Non-secreted forms are hypoglycosylated or unglycosylated. As to expression, detected in blood plasma, cerebrospinal fluid, milk, seminal plasma and colon mucosa. Detected in the germinal center of colon lymphoid nodules and in colon parasympathetic ganglia of the Auerbach plexus (at protein level). Ubiquitous. Detected in brain, testis, ovary, liver and pancreas, and at lower levels in kidney, heart, spleen and lung.

The protein resides in the secreted. Its subcellular location is the cytoplasm. It is found in the nucleus. It localises to the mitochondrion membrane. The protein localises to the cytosol. The protein resides in the microsome. Its subcellular location is the endoplasmic reticulum. It is found in the mitochondrion. It localises to the perinuclear region. The protein localises to the cytoplasmic vesicle. The protein resides in the secretory vesicle. Its subcellular location is the chromaffin granule. In terms of biological role, functions as extracellular chaperone that prevents aggregation of non native proteins. Prevents stress-induced aggregation of blood plasma proteins. Inhibits formation of amyloid fibrils by APP, APOC2, B2M, CALCA, CSN3, SNCA and aggregation-prone LYZ variants (in vitro). Does not require ATP. Maintains partially unfolded proteins in a state appropriate for subsequent refolding by other chaperones, such as HSPA8/HSC70. Does not refold proteins by itself. Binding to cell surface receptors triggers internalization of the chaperone-client complex and subsequent lysosomal or proteasomal degradation. Protects cells against apoptosis and against cytolysis by complement: inhibits assembly of the complement membrane attack complex (MAC) by preventing polymerization of C9 pore component of the MAC complex. Intracellular forms interact with ubiquitin and SCF (SKP1-CUL1-F-box protein) E3 ubiquitin-protein ligase complexes and promote the ubiquitination and subsequent proteasomal degradation of target proteins. Promotes proteasomal degradation of COMMD1 and IKBKB. Modulates NF-kappa-B transcriptional activity. A mitochondrial form suppresses BAX-dependent release of cytochrome c into the cytoplasm and inhibit apoptosis. Plays a role in the regulation of cell proliferation. An intracellular form suppresses stress-induced apoptosis by stabilizing mitochondrial membrane integrity through interaction with HSPA5. Secreted form does not affect caspase or BAX-mediated intrinsic apoptosis and TNF-induced NF-kappa-B-activity. Secreted form act as an important modulator during neuronal differentiation through interaction with STMN3. Plays a role in the clearance of immune complexes that arise during cell injury. Its function is as follows. Does not affect caspase or BAX-mediated intrinsic apoptosis and TNF-induced NF-kappa-B-activity. Functionally, does not affect caspase or BAX-mediated intrinsic apoptosis and TNF-induced NF-kappa-B-activity. Promotes cell death through interaction with BCL2L1 that releases and activates BAX. The chain is Clusterin from Homo sapiens (Human).